We begin with the raw amino-acid sequence, 209 residues long: Ion-translocating oxidoreductase complex subunit G (209 aa).

Residues 9–29 (ATTLALFAASTTAVTAVVNML) traverse the membrane as a helical segment. Thr175 carries the FMN phosphoryl threonine modification.

This sequence belongs to the RnfG family. In terms of assembly, the complex is composed of six subunits: RnfA, RnfB, RnfC, RnfD, RnfE and RnfG. FMN serves as cofactor.

Its subcellular location is the cell inner membrane. In terms of biological role, part of a membrane-bound complex that couples electron transfer with translocation of ions across the membrane. In Pectobacterium atrosepticum (strain SCRI 1043 / ATCC BAA-672) (Erwinia carotovora subsp. atroseptica), this protein is Ion-translocating oxidoreductase complex subunit G.